We begin with the raw amino-acid sequence, 36 residues long: Glycine-rich protein GWK (36 aa).

Residues 1–36 (YKRGGGGWGGGGGWKGGGGGGGGWKGGGGGGKGGGG) form a disordered region.

In terms of biological role, possesses antifungal activity against a number of phytopathogenic fungi, including H.sativum and F.culmorum. This Cucumis melo (Muskmelon) protein is Glycine-rich protein GWK.